We begin with the raw amino-acid sequence, 160 residues long: Transcription elongation factor GreA (160 aa).

Residues 1-72 (MAEKTYPMTL…QISSLETKIR (72 aa)) adopt a coiled-coil conformation.

This sequence belongs to the GreA/GreB family.

In terms of biological role, necessary for efficient RNA polymerase transcription elongation past template-encoded arresting sites. The arresting sites in DNA have the property of trapping a certain fraction of elongating RNA polymerases that pass through, resulting in locked ternary complexes. Cleavage of the nascent transcript by cleavage factors such as GreA or GreB allows the resumption of elongation from the new 3'terminus. GreA releases sequences of 2 to 3 nucleotides. This chain is Transcription elongation factor GreA, found in Streptococcus gordonii (strain Challis / ATCC 35105 / BCRC 15272 / CH1 / DL1 / V288).